We begin with the raw amino-acid sequence, 370 residues long: Histidinol-phosphate aminotransferase 3 (370 aa).

Lysine 233 is modified (N6-(pyridoxal phosphate)lysine).

It belongs to the class-II pyridoxal-phosphate-dependent aminotransferase family. Histidinol-phosphate aminotransferase subfamily. In terms of assembly, homodimer. The cofactor is pyridoxal 5'-phosphate.

It catalyses the reaction L-histidinol phosphate + 2-oxoglutarate = 3-(imidazol-4-yl)-2-oxopropyl phosphate + L-glutamate. It functions in the pathway amino-acid biosynthesis; L-histidine biosynthesis; L-histidine from 5-phospho-alpha-D-ribose 1-diphosphate: step 7/9. The chain is Histidinol-phosphate aminotransferase 3 from Burkholderia lata (strain ATCC 17760 / DSM 23089 / LMG 22485 / NCIMB 9086 / R18194 / 383).